The sequence spans 36 residues: Conotoxin Bt11.4 (36 aa).

4 disulfides stabilise this stretch: Cys-2-Cys-16, Cys-9-Cys-21, Cys-15-Cys-26, and Cys-20-Cys-33.

This sequence belongs to the conotoxin I1 superfamily. In terms of tissue distribution, expressed by the venom duct.

Its subcellular location is the secreted. In Conus betulinus (Beech cone), this protein is Conotoxin Bt11.4.